The following is a 332-amino-acid chain: MKQVQTKRDWKKLAYDVVEEKVITKEDAIAILEADDTEILEIMNAAYIIRHHHFGKKVKLNMIINTKSGLCPEDCGYCSQSIISEAPIDKYAWLTQEKIVEGAHEAIRRKAGTYCIVASGRRPTDKEVNHVIGAVKEIRETTDLKICCCLGFLNEDQAGRLAEAGVHRYNHNLNTHVNNYESICSTHTYDDRVDTVQKAKQAGISPCSGAIFGMGETIEERAEIAFELQRIDADSIPCNFLVAVKGTPLEGQKELTPVECLKVLAMMRFVNPTKEIRISGGREINLRSVQPIGLFAANSIFVGDYLTTAGQEPTADWGMIEDLGFEIEECAL.

Residues 53-282 (HFGKKVKLNM…TKEIRISGGR (230 aa)) enclose the Radical SAM core domain. 3 residues coordinate [4Fe-4S] cluster: Cys71, Cys75, and Cys78. [2Fe-2S] cluster is bound by residues Cys115, Cys147, Cys207, and Arg277.

It belongs to the radical SAM superfamily. Biotin synthase family. Homodimer. The cofactor is [4Fe-4S] cluster. Requires [2Fe-2S] cluster as cofactor.

It carries out the reaction (4R,5S)-dethiobiotin + (sulfur carrier)-SH + 2 reduced [2Fe-2S]-[ferredoxin] + 2 S-adenosyl-L-methionine = (sulfur carrier)-H + biotin + 2 5'-deoxyadenosine + 2 L-methionine + 2 oxidized [2Fe-2S]-[ferredoxin]. Its pathway is cofactor biosynthesis; biotin biosynthesis; biotin from 7,8-diaminononanoate: step 2/2. Catalyzes the conversion of dethiobiotin (DTB) to biotin by the insertion of a sulfur atom into dethiobiotin via a radical-based mechanism. This Bacillus cereus (strain ATCC 10987 / NRS 248) protein is Biotin synthase.